We begin with the raw amino-acid sequence, 119 residues long: Large ribosomal subunit protein eL31y (119 aa).

It belongs to the eukaryotic ribosomal protein eL31 family.

This chain is Large ribosomal subunit protein eL31y (RPL31B), found in Arabidopsis thaliana (Mouse-ear cress).